The following is a 133-amino-acid chain: Small ribosomal subunit protein uS8 (133 aa).

The tract at residues 1 to 32 (MANHDPISDMLTRIRNASEKRHESTKVPASRM) is disordered. Over residues 16 to 25 (NASEKRHEST) the composition is skewed to basic and acidic residues.

This sequence belongs to the universal ribosomal protein uS8 family. In terms of assembly, part of the 30S ribosomal subunit. Contacts proteins S5 and S12.

Functionally, one of the primary rRNA binding proteins, it binds directly to 16S rRNA central domain where it helps coordinate assembly of the platform of the 30S subunit. This chain is Small ribosomal subunit protein uS8, found in Synechococcus sp. (strain CC9311).